A 353-amino-acid polypeptide reads, in one-letter code: Photosystem II D2 protein (353 aa).

T2 bears the N-acetylthreonine mark. T2 bears the Phosphothreonine mark. Residues 41-61 traverse the membrane as a helical segment; sequence CAYFSLGGWFTGTTFVTSWYT. H118 provides a ligand contact to chlorophyll a. The chain crosses the membrane as a helical span at residues 125–141; it reads GFMLRQFELARSVQLRP. Pheophytin a is bound by residues Q130 and N143. Residues 153–166 traverse the membrane as a helical segment; sequence VFVSVFLIYPLGQS. Chlorophyll a is bound at residue H198. Residues 208–228 traverse the membrane as a helical segment; the sequence is AALLCAIHGATVENTLFEDGD. Residues H215 and F262 each contribute to the a plastoquinone site. H215 is a Fe cation binding site. Residue H269 coordinates Fe cation. The chain crosses the membrane as a helical span at residues 279 to 295; that stretch reads GLWMSAIGVVGLALNLR.

This sequence belongs to the reaction center PufL/M/PsbA/D family. As to quaternary structure, PSII is composed of 1 copy each of membrane proteins PsbA, PsbB, PsbC, PsbD, PsbE, PsbF, PsbH, PsbI, PsbJ, PsbK, PsbL, PsbM, PsbT, PsbX, PsbY, PsbZ, Psb30/Ycf12, at least 3 peripheral proteins of the oxygen-evolving complex and a large number of cofactors. It forms dimeric complexes. The D1/D2 heterodimer binds P680, chlorophylls that are the primary electron donor of PSII, and subsequent electron acceptors. It shares a non-heme iron and each subunit binds pheophytin, quinone, additional chlorophylls, carotenoids and lipids. There is also a Cl(-1) ion associated with D1 and D2, which is required for oxygen evolution. The PSII complex binds additional chlorophylls, carotenoids and specific lipids. serves as cofactor.

It is found in the plastid. The protein resides in the chloroplast thylakoid membrane. It catalyses the reaction 2 a plastoquinone + 4 hnu + 2 H2O = 2 a plastoquinol + O2. Functionally, photosystem II (PSII) is a light-driven water:plastoquinone oxidoreductase that uses light energy to abstract electrons from H(2)O, generating O(2) and a proton gradient subsequently used for ATP formation. It consists of a core antenna complex that captures photons, and an electron transfer chain that converts photonic excitation into a charge separation. The D1/D2 (PsbA/PsbD) reaction center heterodimer binds P680, the primary electron donor of PSII as well as several subsequent electron acceptors. D2 is needed for assembly of a stable PSII complex. This Physcomitrium patens (Spreading-leaved earth moss) protein is Photosystem II D2 protein.